Here is a 211-residue protein sequence, read N- to C-terminus: tRNA (guanine-N(7)-)-methyltransferase (211 aa).

Residues Glu44, Asp69, Asp96, and Asp118 each coordinate S-adenosyl-L-methionine. Residue Asp118 is part of the active site. Substrate is bound at residue Lys122. An interaction with RNA region spans residues 124–129; it reads RHEKRR. Substrate-binding positions include Asp154 and 191–194; that span reads TEYE.

It belongs to the class I-like SAM-binding methyltransferase superfamily. TrmB family.

It catalyses the reaction guanosine(46) in tRNA + S-adenosyl-L-methionine = N(7)-methylguanosine(46) in tRNA + S-adenosyl-L-homocysteine. It functions in the pathway tRNA modification; N(7)-methylguanine-tRNA biosynthesis. Catalyzes the formation of N(7)-methylguanine at position 46 (m7G46) in tRNA. This Streptococcus pneumoniae (strain CGSP14) protein is tRNA (guanine-N(7)-)-methyltransferase.